We begin with the raw amino-acid sequence, 225 residues long: UPF0173 metal-dependent hydrolase Pisl_0803 (225 aa).

The protein belongs to the UPF0173 family.

This Pyrobaculum islandicum (strain DSM 4184 / JCM 9189 / GEO3) protein is UPF0173 metal-dependent hydrolase Pisl_0803.